Consider the following 536-residue polypeptide: Carboxypeptidase Y homolog A (536 aa).

An N-terminal signal peptide occupies residues 1 to 17; sequence MKFFTTGLLATAALAAA. The propeptide occupies 18–124; that stretch reads QEQQVLQAED…KLHNYDLRVK (107 aa). Cystine bridges form between Cys-172/Cys-412, Cys-306/Cys-320, Cys-330/Cys-353, Cys-337/Cys-346, and Cys-375/Cys-382. N-linked (GlcNAc...) asparagine glycosylation occurs at Asn-203. Residue Ser-259 is part of the active site. The active site involves Asp-451. Residue Asn-502 is glycosylated (N-linked (GlcNAc...) asparagine). The active site involves His-513.

The protein belongs to the peptidase S10 family.

The protein resides in the vacuole. The enzyme catalyses Release of a C-terminal amino acid with broad specificity.. Functionally, vacuolar carboxypeptidase involved in degradation of small peptides. Digests preferentially peptides containing an aliphatic or hydrophobic residue in P1' position, as well as methionine, leucine or phenylalanine in P1 position of ester substrate. The sequence is that of Carboxypeptidase Y homolog A (cpyA) from Trichophyton rubrum (Athlete's foot fungus).